The primary structure comprises 301 residues: MPINIPTHLPAKQVLESEHIFVMDESRAFHQDIRPQKIIILNLMPKKIQTETQLLRLLGNSPLQVHFTFLIPSTHTPKNTAREHLDEFYTTFSNIRHKRFDGMIITGAPIEHLAFEEVSYWEELKEIMEWSKTNVTSTLHICWGAQAGLYYHYGVEKIQMPKKIFGVFEHTVLSKHERLVRGFDELYYVPHSRHTDINMEQLQAVPELNILTASKEAGVCLIVSKDEKQVFLTGHPEYDTNTLLQEYERDLERNLSTVEAPKHYFAKGSNEPVNRWKAHATLLFMNWLNYYVYQETPYEWD.

Cysteine 142 acts as the Acyl-thioester intermediate in catalysis. Substrate contacts are provided by lysine 163 and serine 192. Catalysis depends on histidine 235, which acts as the Proton acceptor. Glutamate 237 is an active-site residue. Arginine 249 contributes to the substrate binding site.

It belongs to the MetA family.

The protein localises to the cytoplasm. It carries out the reaction L-homoserine + acetyl-CoA = O-acetyl-L-homoserine + CoA. It functions in the pathway amino-acid biosynthesis; L-methionine biosynthesis via de novo pathway; O-acetyl-L-homoserine from L-homoserine: step 1/1. Functionally, transfers an acetyl group from acetyl-CoA to L-homoserine, forming acetyl-L-homoserine. In Bacillus subtilis (strain 168), this protein is Homoserine O-acetyltransferase.